The following is a 594-amino-acid chain: CTP synthase (594 aa).

The segment at 1–272 (MARPKNVKYV…DLRVLKKLGL (272 aa)) is amidoligase domain. Position 18 (S18) interacts with CTP. Position 18 (S18) interacts with UTP. 19–24 (SLGKGI) lines the ATP pocket. Y59 is a binding site for L-glutamine. D76 is an ATP binding site. Positions 76 and 146 each coordinate Mg(2+). Residues 153 to 155 (DIE), 193 to 198 (KTKPTQ), and K229 contribute to the CTP site. UTP is bound by residues 193-198 (KTKPTQ) and K229. The Glutamine amidotransferase type-1 domain maps to 299-543 (TIVVCGKYTE…VGAAKSYAAV (245 aa)). G363 contributes to the L-glutamine binding site. Catalysis depends on C390, which acts as the Nucleophile; for glutamine hydrolysis. Residues 391 to 394 (LGMQ), E414, and R471 contribute to the L-glutamine site. Residues H516 and E518 contribute to the active site. Residues 562–571 (AEAYAAYSEE) show a composition bias toward low complexity. Positions 562–594 (AEAYAAYSEESSAESKSFFPDNGGHDEERDSGQ) are disordered. Residues 584–594 (GGHDEERDSGQ) are compositionally biased toward basic and acidic residues.

This sequence belongs to the CTP synthase family. Homotetramer.

It carries out the reaction UTP + L-glutamine + ATP + H2O = CTP + L-glutamate + ADP + phosphate + 2 H(+). It catalyses the reaction L-glutamine + H2O = L-glutamate + NH4(+). The catalysed reaction is UTP + NH4(+) + ATP = CTP + ADP + phosphate + 2 H(+). Its pathway is pyrimidine metabolism; CTP biosynthesis via de novo pathway; CTP from UDP: step 2/2. Allosterically activated by GTP, when glutamine is the substrate; GTP has no effect on the reaction when ammonia is the substrate. The allosteric effector GTP functions by stabilizing the protein conformation that binds the tetrahedral intermediate(s) formed during glutamine hydrolysis. Inhibited by the product CTP, via allosteric rather than competitive inhibition. Its function is as follows. Catalyzes the ATP-dependent amination of UTP to CTP with either L-glutamine or ammonia as the source of nitrogen. Regulates intracellular CTP levels through interactions with the four ribonucleotide triphosphates. The protein is CTP synthase of Chlorobium phaeovibrioides (strain DSM 265 / 1930) (Prosthecochloris vibrioformis (strain DSM 265)).